Reading from the N-terminus, the 428-residue chain is Serine--tRNA ligase (428 aa).

235-237 contributes to the L-serine binding site; that stretch reads TAE. An ATP-binding site is contributed by 266–268; it reads RSE. Residue E289 participates in L-serine binding. 353 to 356 is a binding site for ATP; the sequence is EISS. Residue S389 participates in L-serine binding.

The protein belongs to the class-II aminoacyl-tRNA synthetase family. Type-1 seryl-tRNA synthetase subfamily. In terms of assembly, homodimer. The tRNA molecule binds across the dimer.

The protein localises to the cytoplasm. It carries out the reaction tRNA(Ser) + L-serine + ATP = L-seryl-tRNA(Ser) + AMP + diphosphate + H(+). The catalysed reaction is tRNA(Sec) + L-serine + ATP = L-seryl-tRNA(Sec) + AMP + diphosphate + H(+). It participates in aminoacyl-tRNA biosynthesis; selenocysteinyl-tRNA(Sec) biosynthesis; L-seryl-tRNA(Sec) from L-serine and tRNA(Sec): step 1/1. Catalyzes the attachment of serine to tRNA(Ser). Is also able to aminoacylate tRNA(Sec) with serine, to form the misacylated tRNA L-seryl-tRNA(Sec), which will be further converted into selenocysteinyl-tRNA(Sec). This is Serine--tRNA ligase from Shewanella amazonensis (strain ATCC BAA-1098 / SB2B).